A 340-amino-acid chain; its full sequence is MNNRFLDACWGKPVDRTPVWLMRQAGRYLPEYMAVRSKCTFLELCKTPELAAEVTLQPVDILGVDAAILFSDILTPVEPMGLKLDFVPGPVFETPVRTMADVERLRIPNPEEDVPYVLDTIKILRKELAGRVPLIGFGGAPFTLACYMVEGKGSKDWATIKRMMYAAPEVYAALMDKVTMMDMEYLNAQIRAGAQAIQIFDTWGGVLSPTDYEKFVLPYTRKLINGLNRQNTPVIHFVKGAGTMLETVQKAGGDVMGLDWHVNLGKARDVLGPNMAVQGNLDPTVLYAPKEVIEVEVKRVLDENAGRPGHIFNLGHGILPTVPPENAIHMVECVHRLSQK.

Residues 23-27, Asp-72, Tyr-147, Thr-202, and His-316 contribute to the substrate site; that span reads RQAGR.

This sequence belongs to the uroporphyrinogen decarboxylase family. As to quaternary structure, homodimer.

The protein localises to the cytoplasm. The enzyme catalyses uroporphyrinogen III + 4 H(+) = coproporphyrinogen III + 4 CO2. The protein operates within porphyrin-containing compound metabolism; protoporphyrin-IX biosynthesis; coproporphyrinogen-III from 5-aminolevulinate: step 4/4. Catalyzes the decarboxylation of four acetate groups of uroporphyrinogen-III to yield coproporphyrinogen-III. The protein is Uroporphyrinogen decarboxylase of Geobacter metallireducens (strain ATCC 53774 / DSM 7210 / GS-15).